Here is a 1020-residue protein sequence, read N- to C-terminus: Nucleotide-binding oligomerization domain-containing protein 2 (1020 aa).

CARD domains are found at residues 6-104 (CDMC…GSWD) and 106-200 (HSLH…AECQ). The ATG16L1-binding motif signature appears at 43–57 (WDVLSREDYEGLSLP). ADP contacts are provided by Thr-219, Tyr-232, Thr-233, Gly-282, Ser-283, Gly-284, Lys-285, Ser-286, and Thr-287. Positions 221-254 (DGSENLCLEDIYTENILELQTEVGTAGALQKSPA) are required for CARD9 binding. The 328-residue stretch at 273–600 (DTILVVGEAG…AAFYLAVSAD (328 aa)) folds into the NACHT domain. The S-palmitoyl cysteine moiety is linked to residue Cys-375. Residue His-583 coordinates ADP. 10 LRR repeats span residues 685–709 (ARAR…VPGE), 726–749 (LYEM…HLKL), 766–792 (LQHL…QLRP), 794–817 (LGVC…TLVE), 822–845 (CEQL…SMAK), 850–873 (KQNF…VLAQ), 906–929 (HQNL…ALAL), 934–962 (NKSL…LKRN), 963–985 (STLK…ALLQ), and 1005–1019 (LEEI…ARLL).

This sequence belongs to the NOD1-NOD2 family. In terms of assembly, homooligomer: homooligomerizes following muramyl dipeptide (MDP)-binding, promoting RIPK2 recruitment. Interacts (via CARD domain) with RIPK2 (via CARD domain). Following RIPK2 recruitment, RIPK2 homooligomerizes via its CARD domain and forms long filaments named RIPosomes. Interacts (via CARD domain) with ubiquitin; inhibiting interaction with RIPK2. Component of a signaling complex consisting of ARHGEF2, NOD2 and RIPK2. Interacts with ANKRD17 (via N-terminus). Interacts with HSPA1A; the interaction enhances NOD2 stability. Interacts (via both CARD domains) with HSP90; the interaction enhances NOD2 stability. Interacts (via CARD domain) with SOCS3; the interaction promotes NOD2 degradation. Interacts (via CARD domain) with ERBIN; the interaction inhibits activation of NOD2. Interacts with MAPKBP1; the interaction is enhanced in the presence of muramyl dipeptide (MDP) and inhibits NOD2 homooligomerization and activation. Interacts with INAVA; the interaction takes place upon Pattern recognition receptor (PRR) stimulation. Interacts (via NACHT domain) with CARD9. Interacts (via CARD domain) with CASP1; this interaction leads to IL1B processing. Also interacts with CASP4. Interacts with NLRP1; this interaction is enhanced in the presence of muramyl dipeptide (MDP) and leads to increased IL1B release. Interacts with NLRP12; this interaction promotes degradation of NOD2 through the ubiquitin-proteasome pathway. Interacts with ANKHD1, C10orf67, CHMP5, DOCK7, ENTR1, KRT15, LDOC1, PPP1R12C, PPP2R3B, TRIM41 and VIM. Interacts with MAVS; interaction takes place following single-stranded RNA (ssRNA)-binding. Interacts with ATG16L1. Interacts with Irgm1; promoting Irgm1 'Lys-63'-linked polyubiquitination, which is required for interactions with the core autophagy factors. In terms of processing, palmitoylated by ZDHHC5; palmitoylation is required for proper recruitment to the bacterial entry site and hence for proper signaling upon cognate peptidoglycan detection. Palmitoylation promotes localization to the cell membrane. Palmitoylation protects from SQSTM1/p62-dependent autophagic degradation. Polyubiquitinated by TRIM27, leading to proteasome-mediated degradation. Polyubiquitinated and degraded following muramyl dipeptide (MDP) stimulation, conferring MDP tolerance and preventing septic shock. Post-translationally, degraded via selective autophagy following interaction with Irgm1. Irgm1 promotes NOD2-RIPK2 RIPosome recruitment to autophagosome membranes, promoting their SQSTM1/p62-dependent autophagic degradation. In terms of processing, O-glycosylated by OGT, O-GlcNAcylation increases protein stability. In terms of tissue distribution, expressed in monocytes, macrophages, dendritic cells, hepatocytes, preadipocytes, epithelial cells of oral cavity, lung and intestine. In intestine, highly expressed in ileal Paneth cells of the crypt and in intestinal stem cells. Also expressed in neurons of several brain regions including the hypothalamus.

Its subcellular location is the cell membrane. It is found in the basolateral cell membrane. The protein localises to the cytoplasm. The protein resides in the mitochondrion. Its activity is regulated as follows. ADP-binding promotes an inactive closed conformation. Functionally, pattern recognition receptor (PRR) that detects bacterial peptidoglycan fragments and other danger signals and plays an important role in gastrointestinal immunity. Specifically activated by muramyl dipeptide (MDP), a fragment of bacterial peptidoglycan found in every bacterial peptidoglycan type. NOD2 specifically recognizes and binds 6-O-phospho-MDP, the phosphorylated form of MDP, which is generated by NAGK. 6-O-phospho-MDP-binding triggers oligomerization that facilitates the binding and subsequent activation of the proximal adapter receptor-interacting RIPK2. Following recruitment, RIPK2 undergoes 'Met-1'- (linear) and 'Lys-63'-linked polyubiquitination by E3 ubiquitin-protein ligases XIAP, BIRC2, BIRC3 and the LUBAC complex, becoming a scaffolding protein for downstream effectors, triggering activation of the NF-kappa-B and MAP kinases signaling. This in turn leads to the transcriptional activation of hundreds of genes involved in immune response. Its ability to detect bacterial MDP plays a central role in maintaining the equilibrium between intestinal microbiota and host immune responses to control inflammation. An imbalance in this relationship results in dysbiosis, whereby pathogenic bacteria prevail on commensals, causing damage in the intestinal epithelial barrier as well as allowing bacterial invasion and inflammation. Acts as a regulator of appetite by sensing MDP in a subset of brain neurons: microbiota-derived MDP reach the brain, where they bind and activate NOD2 in inhibitory hypothalamic neurons, decreasing neuronal activity, thereby regulating satiety and body temperature. NOD2-dependent MDP-sensing of bacterial cell walls in the intestinal epithelial compartment contributes to sustained postnatal growth upon undernutrition. Also plays a role in antiviral response by acting as a sensor of single-stranded RNA (ssRNA) from viruses: upon ssRNA-binding, interacts with MAVS, leading to activation of interferon regulatory factor-3/IRF3 and expression of type I interferon. Also acts as a regulator of autophagy in dendritic cells via its interaction with ATG16L1, possibly by recruiting ATG16L1 at the site of bacterial entry. NOD2 activation in the small intestine crypt also contributes to intestinal stem cells survival and function: acts by promoting mitophagy via its association with ATG16L1. In addition to its main role in innate immunity, also regulates the adaptive immune system by acting as regulator of helper T-cell and regulatory T-cells (Tregs). Besides recognizing pathogens, also involved in the endoplasmic reticulum stress response: acts by sensing and binding to the cytosolic metabolite sphingosine-1-phosphate generated in response to endoplasmic reticulum stress, initiating an inflammation process that leads to activation of the NF-kappa-B and MAP kinases signaling. May also be involved in NLRP1 activation following activation by MDP, leading to CASP1 activation and IL1B release in macrophages. This is Nucleotide-binding oligomerization domain-containing protein 2 from Mus musculus (Mouse).